The chain runs to 209 residues: Probable phosphatidylglycerophosphate synthase (209 aa).

A run of 4 helical transmembrane segments spans residues 32–52, 105–125, 147–167, and 171–191; these read ILTLLRLVMVPVFLLALFYGG, ALIGLSMLGDLPWWVTVLILT, WGGKLKTFVQAVAIGLFVLPL, and LHVAAVVVMAAAILLTVITGV.

Belongs to the CDP-alcohol phosphatidyltransferase class-I family.

The protein resides in the cell membrane. It carries out the reaction a CDP-1,2-diacyl-sn-glycerol + sn-glycerol 3-phosphate = a 1,2-diacyl-sn-glycero-3-phospho-(1'-sn-glycero-3'-phosphate) + CMP + H(+). The protein operates within lipid metabolism; phospholipid metabolism. Probably catalyzes the synthesis of phosphatidylglycerophosphate by transferring a phosphatidyl group from CDP-diacylglycerol to glycerol 3-phosphate. The protein is Probable phosphatidylglycerophosphate synthase of Mycobacterium tuberculosis (strain CDC 1551 / Oshkosh).